The chain runs to 527 residues: Homeobox protein NOBOX (527 aa).

4 disordered regions span residues 1–126, 194–245, 271–306, and 488–527; these read MEPT…DLKK, VEKL…DVFP, VTPP…RDVP, and ETGS…GAKE. A DNA-binding region (homeobox) is located at residues 136–195; it reads RKKTRTLYRSDQLEELERIFQEDHYPDSDKRHEISQMVGVTPQRIMVWFQNRRAKWRKVE. Positions 194-203 are enriched in basic and acidic residues; sequence VEKLNEKETK. The span at 488-506 shows a compositional bias: polar residues; that stretch reads ETGSSLSKMSDEQTSSSLE. Over residues 511–527 the composition is skewed to basic and acidic residues; sequence EEVRDKNKNSHAAGAKE.

As to expression, specifically expressed in ovaries and testes. In ovaries, expressed in oocytes from primordial through antral follicles but not in granulosa cells, theca cells and corpora lutea.

It is found in the nucleus. Its function is as follows. Transcription factor which plays an essential role in postnatal follicle development. Binds preferentially to the DNA sequences 5'-TAATTG-3', 5'-TAGTTG-3' and 5'-TAATTA-3'. Directly regulates the transcription of POU5F1 and GDF9 during early folliculogenesis. In Mus musculus (Mouse), this protein is Homeobox protein NOBOX (Nobox).